Consider the following 321-residue polypeptide: Phosphatidate cytidylyltransferase, mitochondrial (321 aa).

The protein belongs to the TAM41 family. Mg(2+) is required as a cofactor. The cofactor is Co(2+). It depends on Cu(2+) as a cofactor.

The protein resides in the mitochondrion inner membrane. It carries out the reaction a 1,2-diacyl-sn-glycero-3-phosphate + CTP + H(+) = a CDP-1,2-diacyl-sn-glycerol + diphosphate. It functions in the pathway phospholipid metabolism; CDP-diacylglycerol biosynthesis; CDP-diacylglycerol from sn-glycerol 3-phosphate: step 3/3. In terms of biological role, catalyzes the formation of CDP-diacylglycerol (CDP-DAG) from phosphatidic acid (PA) in the mitochondrial inner membrane. Required for the biosynthesis of the dimeric phospholipid cardiolipin, which stabilizes supercomplexes of the mitochondrial respiratory chain in the mitochondrial inner membrane. The polypeptide is Phosphatidate cytidylyltransferase, mitochondrial (Caenorhabditis elegans).